A 130-amino-acid polypeptide reads, in one-letter code: Protein NrdI (130 aa).

Belongs to the NrdI family.

Probably involved in ribonucleotide reductase function. This Bacillus velezensis (strain DSM 23117 / BGSC 10A6 / LMG 26770 / FZB42) (Bacillus amyloliquefaciens subsp. plantarum) protein is Protein NrdI.